The primary structure comprises 190 residues: Translation initiation factor IF-3 (190 aa).

Belongs to the IF-3 family. In terms of assembly, monomer.

The protein localises to the cytoplasm. IF-3 binds to the 30S ribosomal subunit and shifts the equilibrium between 70S ribosomes and their 50S and 30S subunits in favor of the free subunits, thus enhancing the availability of 30S subunits on which protein synthesis initiation begins. In Prochlorococcus marinus subsp. pastoris (strain CCMP1986 / NIES-2087 / MED4), this protein is Translation initiation factor IF-3.